Here is a 124-residue protein sequence, read N- to C-terminus: Small ribosomal subunit protein uS13 (124 aa).

Residues 92–117 are compositionally biased toward basic residues; sequence RRGLPVRGQRTKSNARTRKGPRKTVA. The interval 92–124 is disordered; that stretch reads RRGLPVRGQRTKSNARTRKGPRKTVANKKIESK.

It belongs to the universal ribosomal protein uS13 family. In terms of assembly, part of the 30S ribosomal subunit. Forms a loose heterodimer with protein S19. Forms two bridges to the 50S subunit in the 70S ribosome.

Its function is as follows. Located at the top of the head of the 30S subunit, it contacts several helices of the 16S rRNA. In the 70S ribosome it contacts the 23S rRNA (bridge B1a) and protein L5 of the 50S subunit (bridge B1b), connecting the 2 subunits; these bridges are implicated in subunit movement. Contacts the tRNAs in the A and P-sites. The polypeptide is Small ribosomal subunit protein uS13 (Mycoplasmoides gallisepticum (strain R(low / passage 15 / clone 2)) (Mycoplasma gallisepticum)).